We begin with the raw amino-acid sequence, 130 residues long: Large ribosomal subunit protein bL19 (130 aa).

The protein belongs to the bacterial ribosomal protein bL19 family.

Functionally, this protein is located at the 30S-50S ribosomal subunit interface and may play a role in the structure and function of the aminoacyl-tRNA binding site. In Methylorubrum populi (strain ATCC BAA-705 / NCIMB 13946 / BJ001) (Methylobacterium populi), this protein is Large ribosomal subunit protein bL19.